Consider the following 281-residue polypeptide: MLNTLEPQPCETDALSPRLQRSTGSARVVMRRKADGTTALADLAQQGCAKAMLPRVHAPVPEVVFLNTAGGVTGGDSLSYRLDLEAGAQATGATQTAERTYRSSAGTGEMRVHLTLGSGARLDWLPQETILFDGSATRRCTEVEMAADATLLWCETLVFGRAAMGEALSRFAFRDDRQVRRDGKLVLWEPLTLDATHLAPRACLGGARAIATVAFLAPDAEAARDTVRRLAPEGVDWAVSAWDGKLVLRAFAPDAQPLKHALAQVLHVLREGASLPRVWQL.

A disordered region spans residues 1 to 25 (MLNTLEPQPCETDALSPRLQRSTGS).

It belongs to the UreD family. As to quaternary structure, ureD, UreF and UreG form a complex that acts as a GTP-hydrolysis-dependent molecular chaperone, activating the urease apoprotein by helping to assemble the nickel containing metallocenter of UreC. The UreE protein probably delivers the nickel.

The protein localises to the cytoplasm. In terms of biological role, required for maturation of urease via the functional incorporation of the urease nickel metallocenter. The polypeptide is Urease accessory protein UreD (Dinoroseobacter shibae (strain DSM 16493 / NCIMB 14021 / DFL 12)).